Reading from the N-terminus, the 556-residue chain is Glypican-4 (556 aa).

Positions 1 to 18 (MARFGLPALLCTLAVLSA) are cleaved as a signal peptide. Serine 357 carries the phosphoserine modification. Serine 494, serine 498, and serine 500 each carry an O-linked (Xyl...) (glycosaminoglycan) serine glycan. N-linked (GlcNAc...) asparagine glycosylation is present at asparagine 514. Serine 529 is lipidated: GPI-anchor amidated serine. Residues 530–556 (AGVRPGAQAYLLTVFCILFLVMQREWR) constitute a propeptide, removed in mature form.

This sequence belongs to the glypican family.

It is found in the cell membrane. Its subcellular location is the secreted. It localises to the extracellular space. In terms of biological role, cell surface proteoglycan that bears heparan sulfate. May be involved in the development of kidney tubules and of the central nervous system. The polypeptide is Glypican-4 (GPC4) (Homo sapiens (Human)).